The primary structure comprises 182 residues: ATP synthase subunit delta (182 aa).

This sequence belongs to the ATPase delta chain family. F-type ATPases have 2 components, F(1) - the catalytic core - and F(0) - the membrane proton channel. F(1) has five subunits: alpha(3), beta(3), gamma(1), delta(1), epsilon(1). F(0) has three main subunits: a(1), b(2) and c(10-14). The alpha and beta chains form an alternating ring which encloses part of the gamma chain. F(1) is attached to F(0) by a central stalk formed by the gamma and epsilon chains, while a peripheral stalk is formed by the delta and b chains.

The protein resides in the cell inner membrane. Functionally, f(1)F(0) ATP synthase produces ATP from ADP in the presence of a proton or sodium gradient. F-type ATPases consist of two structural domains, F(1) containing the extramembraneous catalytic core and F(0) containing the membrane proton channel, linked together by a central stalk and a peripheral stalk. During catalysis, ATP synthesis in the catalytic domain of F(1) is coupled via a rotary mechanism of the central stalk subunits to proton translocation. Its function is as follows. This protein is part of the stalk that links CF(0) to CF(1). It either transmits conformational changes from CF(0) to CF(1) or is implicated in proton conduction. This is ATP synthase subunit delta from Sulfurihydrogenibium azorense (strain DSM 15241 / OCM 825 / Az-Fu1).